Consider the following 181-residue polypeptide: uncharacterized protein (181 aa).

Transmembrane regions (helical) follow at residues 3-23 (LSQT…VLIL), 67-87 (ALLL…GLSV), 92-112 (VLGV…VLFI), and 159-179 (MFIL…LWII).

The protein belongs to the YggT family.

It localises to the cell membrane. This is an uncharacterized protein from Haemophilus influenzae (strain ATCC 51907 / DSM 11121 / KW20 / Rd).